Consider the following 855-residue polypeptide: Pre-mRNA-splicing factor SYF1 (855 aa).

HAT repeat units lie at residues 15–47 (LVFE…FKQG), 48–80 (APKP…ARRA), 90–122 (PAYE…FLMD), 124–158 (GRVT…FLRS), 160–192 (PLPE…SSDR), 198–230 (QRLA…LISQ), 235–268 (VQSL…YYIR), 270–305 (GHFE…FEES), and 369–407 (GRPR…FYED). Residue lysine 420 is modified to N6-acetyllysine. HAT repeat units follow at residues 498 to 530 (GTFQ…FLEE), 532 to 566 (KYFE…KFIA), 571 to 605 (RKLE…LEEE), 643 to 677 (YGVT…MECK), and 679 to 713 (GEID…FEVR). The interval 810–855 (LAQQVNPEEIQLGEDEDEDEMDLEPNEVRLEQQSVPAAVFGSLKED) is disordered. Positions 820 to 834 (QLGEDEDEDEMDLEP) are enriched in acidic residues. A Phosphoserine modification is found at serine 851.

It belongs to the crooked-neck family. As to quaternary structure, associates with RNA polymerase II, the TCR-specific proteins CKN1/CSA and ERCC6/CSB, and XPA. Identified in the spliceosome C complex. Component of the XAB2 complex, a multimeric protein complex composed of XAB2, PRPF19, AQR, ZNF830, ISY1, and PPIE. Identified in a pentameric intron-binding (IB) complex composed of AQR, XAB2, ISY1, ZNF830 and PPIE that is incorporated into the spliceosome as a preassembled complex. The IB complex does not contain PRPF19.

It localises to the nucleus. Its function is as follows. Involved in pre-mRNA splicing as component of the spliceosome. Involved in transcription-coupled repair (TCR), transcription and pre-mRNA splicing. The polypeptide is Pre-mRNA-splicing factor SYF1 (XAB2) (Homo sapiens (Human)).